The sequence spans 154 residues: Egg-lysin (154 aa).

Residues 1–18 (MKLFVLCIFAMMATLAMS) form the signal peptide.

In terms of assembly, homodimer. In terms of tissue distribution, sperm.

Functionally, dissolves the egg vitelline layer nonenzymatically during fertilization. It creates a hole of about 3 mu-m in diameter through which the sperm pass. This chain is Egg-lysin, found in Haliotis kamtschatkana (Pinto abalone).